The chain runs to 370 residues: ADP-ribosylhydrolase ARH3 (370 aa).

Residues E35, D66, and D67 each coordinate Mg(2+). Position 66 (D66) interacts with substrate. Substrate-binding positions include 135–141, H171, L225, and I261; that span reads RGSFGNG. Mg(2+)-binding residues include D304, D306, and T307.

It belongs to the ADP-ribosylglycohydrolase family. As to quaternary structure, monomer. It depends on Mg(2+) as a cofactor.

Its subcellular location is the nucleus. It localises to the cytoplasm. It is found in the chromosome. The protein localises to the mitochondrion matrix. The catalysed reaction is [(1''-&gt;2')-ADP-alpha-D-ribose](n) + H2O = [(1''-&gt;2')-ADP-alpha-D-ribose](n-1) + ADP-D-ribose. It catalyses the reaction 1''-O-acetyl-ADP-alpha-D-ribose + H2O = ADP-D-ribose + acetate + H(+). The enzyme catalyses O-(ADP-D-ribosyl)-L-seryl-[protein] + H2O = ADP-D-ribose + L-seryl-[protein]. It carries out the reaction alpha-NAD(+) + H2O = ADP-D-ribose + nicotinamide + H(+). Its activity is regulated as follows. The protein undergoes a dramatic conformational switch from closed to open states upon substrate-binding, which enables specific substrate recognition for the 1''-O-linkage. The glutamate flap (Glu-35) blocks substrate entrance to Mg(2+) in the unliganded closed state. In presence of substrate, Glu-35 is ejected from the active site: this closed-to-open transition significantly widens the substrate-binding channel and precisely positions the scissile 1''-O-linkage for cleavage while securing tightly 2'- and 3'-hydroxyls of ADP-ribose. ADP-ribosylhydrolase that preferentially hydrolyzes the scissile alpha-O-linkage attached to the anomeric C1'' position of ADP-ribose and acts on different substrates, such as proteins ADP-ribosylated on serine and threonine, free poly(ADP-ribose) and O-acetyl-ADP-D-ribose. Specifically acts as a serine mono-ADP-ribosylhydrolase by mediating the removal of mono-ADP-ribose attached to serine residues on proteins, thereby playing a key role in DNA damage response. Serine ADP-ribosylation of proteins constitutes the primary form of ADP-ribosylation of proteins in response to DNA damage. Does not hydrolyze ADP-ribosyl-arginine, -cysteine, -diphthamide, or -asparagine bonds. Also able to degrade protein free poly(ADP-ribose), which is synthesized in response to DNA damage: free poly(ADP-ribose) acts as a potent cell death signal and its degradation by ADPRHL2 protects cells from poly(ADP-ribose)-dependent cell death, a process named parthanatos. Also hydrolyzes free poly(ADP-ribose) in mitochondria. Specifically digests O-acetyl-ADP-D-ribose, a product of deacetylation reactions catalyzed by sirtuins. Specifically degrades 1''-O-acetyl-ADP-D-ribose isomer, rather than 2''-O-acetyl-ADP-D-ribose or 3''-O-acetyl-ADP-D-ribose isomers. The sequence is that of ADP-ribosylhydrolase ARH3 (adprs) from Danio rerio (Zebrafish).